Here is a 647-residue protein sequence, read N- to C-terminus: Probable inactive receptor kinase RLK902 (647 aa).

The first 29 residues, 1-29 (MRLFFTPSMSNLSIFFSILLLSLPLPSIG), serve as a signal peptide directing secretion. LRR repeat units lie at residues 69-93 (GGRV…IFGN), 94-118 (LTQL…LGSC), 119-142 (SDLR…LFSL), 144-165 (NLVR…GFKN), and 166-192 (LTRL…SLDQ). A helical transmembrane segment spans residues 268–288 (GIVIGCVVGLSLIVMILMVLF). Positions 365–639 (RASAEVLGKG…EVVRRIQELR (275 aa)) constitute a Protein kinase domain. At Ser367 the chain carries Phosphoserine. 371 to 379 (LGKGTFGTA) contributes to the ATP binding site. Thr388 bears the Phosphothreonine mark. An ATP-binding site is contributed by Lys393. Ser444 bears the Phosphoserine mark. Thr520 bears the Phosphothreonine mark. Ser540 is subject to Phosphoserine. The residue at position 618 (Thr618) is a Phosphothreonine.

Belongs to the protein kinase superfamily. Ser/Thr protein kinase family. In terms of assembly, interacts with At3g17950, At3g27210 and At5g05190. Post-translationally, autophosphorylation. Expressed in root tips, lateral root primordia, stipules, and floral organ abscission zones.

The protein resides in the cell membrane. The chain is Probable inactive receptor kinase RLK902 (RLK902) from Arabidopsis thaliana (Mouse-ear cress).